A 556-amino-acid polypeptide reads, in one-letter code: 2-succinyl-5-enolpyruvyl-6-hydroxy-3-cyclohexene-1-carboxylate synthase (556 aa).

It belongs to the TPP enzyme family. MenD subfamily. Homodimer. Mg(2+) serves as cofactor. The cofactor is Mn(2+). It depends on thiamine diphosphate as a cofactor.

It catalyses the reaction isochorismate + 2-oxoglutarate + H(+) = 5-enolpyruvoyl-6-hydroxy-2-succinyl-cyclohex-3-ene-1-carboxylate + CO2. It participates in quinol/quinone metabolism; 1,4-dihydroxy-2-naphthoate biosynthesis; 1,4-dihydroxy-2-naphthoate from chorismate: step 2/7. Its pathway is quinol/quinone metabolism; menaquinone biosynthesis. Functionally, catalyzes the thiamine diphosphate-dependent decarboxylation of 2-oxoglutarate and the subsequent addition of the resulting succinic semialdehyde-thiamine pyrophosphate anion to isochorismate to yield 2-succinyl-5-enolpyruvyl-6-hydroxy-3-cyclohexene-1-carboxylate (SEPHCHC). This is 2-succinyl-5-enolpyruvyl-6-hydroxy-3-cyclohexene-1-carboxylate synthase from Shigella boydii serotype 18 (strain CDC 3083-94 / BS512).